We begin with the raw amino-acid sequence, 116 residues long: Large ribosomal subunit protein bL19 (116 aa).

This sequence belongs to the bacterial ribosomal protein bL19 family.

Its function is as follows. This protein is located at the 30S-50S ribosomal subunit interface and may play a role in the structure and function of the aminoacyl-tRNA binding site. This Stutzerimonas stutzeri (strain A1501) (Pseudomonas stutzeri) protein is Large ribosomal subunit protein bL19.